Consider the following 372-residue polypeptide: Saccharopine dehydrogenase [NAD(+), L-lysine-forming] (372 aa).

The L-saccharopine site is built by Arg18 and Lys77. The active-site Proton acceptor is Lys77. Catalysis depends on His95, which acts as the Proton donor. Gln100 serves as a coordination point for L-saccharopine. An NAD(+)-binding site is contributed by Arg129. L-saccharopine contacts are provided by Arg130 and Phe134. Residues 200 to 201, Asp224, Thr228, Tyr248, and Val275 contribute to the NAD(+) site; that span reads GR. Residues Cys202 and Cys246 are joined by a disulfide bond. Position 276–278 (276–278) interacts with L-saccharopine; the sequence is SAD. 316-319 is a binding site for NAD(+); sequence IDHL.

Belongs to the AlaDH/PNT family. As to quaternary structure, monomer.

The enzyme catalyses L-saccharopine + NAD(+) + H2O = L-lysine + 2-oxoglutarate + NADH + H(+). The protein operates within amino-acid biosynthesis; L-lysine biosynthesis via AAA pathway; L-lysine from L-alpha-aminoadipate (fungal route): step 3/3. Catalyzes the NAD(+)-dependent cleavage of saccharopine to L-lysine and 2-oxoglutarate, the final step in the alpha-aminoadipate (AAA) pathway for lysin biosynthesis. In Neurospora crassa (strain ATCC 24698 / 74-OR23-1A / CBS 708.71 / DSM 1257 / FGSC 987), this protein is Saccharopine dehydrogenase [NAD(+), L-lysine-forming] (lys-4).